A 469-amino-acid chain; its full sequence is Glutamate--tRNA ligase 2 (469 aa).

The 'HIGH' region signature appears at 8–18 (PSPTGFLHVGG). Positions 250 to 254 (KLSKR) match the 'KMSKS' region motif. Residue Lys-253 participates in ATP binding.

The protein belongs to the class-I aminoacyl-tRNA synthetase family. Glutamate--tRNA ligase type 1 subfamily. Monomer.

The protein localises to the cytoplasm. It catalyses the reaction tRNA(Glu) + L-glutamate + ATP = L-glutamyl-tRNA(Glu) + AMP + diphosphate. Functionally, catalyzes the attachment of glutamate to tRNA(Glu) in a two-step reaction: glutamate is first activated by ATP to form Glu-AMP and then transferred to the acceptor end of tRNA(Glu). The sequence is that of Glutamate--tRNA ligase 2 from Thermotoga petrophila (strain ATCC BAA-488 / DSM 13995 / JCM 10881 / RKU-1).